Consider the following 628-residue polypeptide: Putative ankyrin repeat protein L769 (628 aa).

4 ANK repeats span residues 217–246 (NYMD…EYDF), 333–362 (DLDE…DINR), 421–451 (TAEN…NHDL), and 512–542 (NNLK…DQDY).

The chain is Putative ankyrin repeat protein L769 from Acanthamoeba polyphaga mimivirus (APMV).